The sequence spans 176 residues: Phosphopantetheine adenylyltransferase (176 aa).

Ser8 provides a ligand contact to substrate. Residues 8–9 and His16 each bind ATP; that span reads SF. Substrate is bound by residues Lys40, Thr72, and Arg86. ATP-binding positions include 87–89, Glu97, and 122–128; these read GLR and YSFLSSS.

Belongs to the bacterial CoaD family. Homohexamer. Mg(2+) is required as a cofactor.

The protein localises to the cytoplasm. It carries out the reaction (R)-4'-phosphopantetheine + ATP + H(+) = 3'-dephospho-CoA + diphosphate. It participates in cofactor biosynthesis; coenzyme A biosynthesis; CoA from (R)-pantothenate: step 4/5. Reversibly transfers an adenylyl group from ATP to 4'-phosphopantetheine, yielding dephospho-CoA (dPCoA) and pyrophosphate. This chain is Phosphopantetheine adenylyltransferase, found in Acaryochloris marina (strain MBIC 11017).